Reading from the N-terminus, the 75-residue chain is ATP synthase subunit c (75 aa).

2 helical membrane passes run 8-28 (FIAIGLSVLGILGAGLGVANI) and 54-74 (AGMVEFTGLLAFVLAMLLMFV).

It belongs to the ATPase C chain family. In terms of assembly, F-type ATPases have 2 components, F(1) - the catalytic core - and F(0) - the membrane proton channel. F(1) has five subunits: alpha(3), beta(3), gamma(1), delta(1), epsilon(1). F(0) has three main subunits: a(1), b(2) and c(10-14). The alpha and beta chains form an alternating ring which encloses part of the gamma chain. F(1) is attached to F(0) by a central stalk formed by the gamma and epsilon chains, while a peripheral stalk is formed by the delta and b chains.

It localises to the cell membrane. F(1)F(0) ATP synthase produces ATP from ADP in the presence of a proton or sodium gradient. F-type ATPases consist of two structural domains, F(1) containing the extramembraneous catalytic core and F(0) containing the membrane proton channel, linked together by a central stalk and a peripheral stalk. During catalysis, ATP synthesis in the catalytic domain of F(1) is coupled via a rotary mechanism of the central stalk subunits to proton translocation. In terms of biological role, key component of the F(0) channel; it plays a direct role in translocation across the membrane. A homomeric c-ring of between 10-14 subunits forms the central stalk rotor element with the F(1) delta and epsilon subunits. This Wolbachia sp. subsp. Brugia malayi (strain TRS) protein is ATP synthase subunit c.